Reading from the N-terminus, the 229-residue chain is Flagellar L-ring protein (229 aa).

Positions 1-25 (MKQVRLPSSATVRAACAVAVAALAG) are cleaved as a signal peptide. Cys-26 is lipidated: N-palmitoyl cysteine. A lipid anchor (S-diacylglycerol cysteine) is attached at Cys-26.

Belongs to the FlgH family. The basal body constitutes a major portion of the flagellar organelle and consists of four rings (L,P,S, and M) mounted on a central rod.

The protein localises to the cell outer membrane. It is found in the bacterial flagellum basal body. In terms of biological role, assembles around the rod to form the L-ring and probably protects the motor/basal body from shearing forces during rotation. This chain is Flagellar L-ring protein, found in Burkholderia orbicola (strain AU 1054).